A 229-amino-acid polypeptide reads, in one-letter code: UPF0758 protein Ppro_3582 (229 aa).

A disordered region spans residues 1-20; it reads MCPGIREWPEDERPREKMLR. The span at 7 to 19 shows a compositional bias: basic and acidic residues; it reads EWPEDERPREKML. Residues 107 to 229 enclose the MPN domain; the sequence is RFTSPRQVFD…YLSFVERGVL (123 aa). Zn(2+) contacts are provided by histidine 178, histidine 180, and aspartate 191. The JAMM motif motif lies at 178 to 191; that stretch reads HNHPTGDPTPSQED.

The protein belongs to the UPF0758 family.

This Pelobacter propionicus (strain DSM 2379 / NBRC 103807 / OttBd1) protein is UPF0758 protein Ppro_3582.